The following is a 324-amino-acid chain: Calmodulin-like protein 12 (324 aa).

EF-hand domains follow at residues 8–43 (DQIT…IGEK), 44–79 (PTKA…NQGH), 97–132 (DQIT…LGKN), 133–168 (RTKA…NQGH), 187–222 (DQIL…LGET), and 223–258 (QTKA…KMID). Ca(2+) is bound by residues Asp21, Asn23, Asp25, Ser27, Glu32, Asp57, Asp59, Asp61, Thr63, Glu68, Asp110, Asn112, Asp114, Ser116, Glu121, Asp146, Asp148, Asp150, Thr152, Glu157, Asp200, Asn202, Asp204, Tyr206, Glu211, Asp236, Asp238, Asp240, Thr242, and Glu247.

Belongs to the calmodulin family. In terms of assembly, interacts with PID. Binds to ABCG36.

In terms of biological role, potential calcium sensor that binds calcium in vitro. The polypeptide is Calmodulin-like protein 12 (Arabidopsis thaliana (Mouse-ear cress)).